A 753-amino-acid polypeptide reads, in one-letter code: Replication restart protein PriA (753 aa).

Residues Ser228 to Leu395 form the Helicase ATP-binding domain. Gly241–Thr248 contacts ATP. The DEAH box signature appears at Asp337–His340. Residues Cys458, Cys461, Cys467, Cys470, Cys485, Cys488, Cys499, and Cys502 each contribute to the Zn(2+) site. The 156-residue stretch at Arg491–Ile646 folds into the Helicase C-terminal domain.

This sequence belongs to the helicase family. PriA subfamily. In terms of assembly, component of the replication restart primosome. Zn(2+) serves as cofactor.

It catalyses the reaction Couples ATP hydrolysis with the unwinding of duplex DNA by translocating in the 3'-5' direction.. It carries out the reaction ATP + H2O = ADP + phosphate + H(+). In terms of biological role, initiates the restart of stalled replication forks, which reloads the replicative helicase on sites other than the origin of replication. Recognizes and binds to abandoned replication forks and remodels them to uncover a helicase loading site. Promotes assembly of the primosome at these replication forks. This Chlamydia trachomatis serovar D (strain ATCC VR-885 / DSM 19411 / UW-3/Cx) protein is Replication restart protein PriA.